The sequence spans 113 residues: Large ribosomal subunit protein uL22 (113 aa).

The protein belongs to the universal ribosomal protein uL22 family. As to quaternary structure, part of the 50S ribosomal subunit.

Functionally, this protein binds specifically to 23S rRNA; its binding is stimulated by other ribosomal proteins, e.g. L4, L17, and L20. It is important during the early stages of 50S assembly. It makes multiple contacts with different domains of the 23S rRNA in the assembled 50S subunit and ribosome. In terms of biological role, the globular domain of the protein is located near the polypeptide exit tunnel on the outside of the subunit, while an extended beta-hairpin is found that lines the wall of the exit tunnel in the center of the 70S ribosome. In Oceanobacillus iheyensis (strain DSM 14371 / CIP 107618 / JCM 11309 / KCTC 3954 / HTE831), this protein is Large ribosomal subunit protein uL22.